The sequence spans 89 residues: Large ribosomal subunit protein eL31 (89 aa).

It belongs to the eukaryotic ribosomal protein eL31 family.

This Thermoplasma acidophilum (strain ATCC 25905 / DSM 1728 / JCM 9062 / NBRC 15155 / AMRC-C165) protein is Large ribosomal subunit protein eL31 (rpl31e).